A 31-amino-acid chain; its full sequence is uncharacterized protein (31 aa).

The chain crosses the membrane as a helical span at residues 7 to 29 (TVVLINFFAAVGLFTLISMRFGW).

The protein localises to the cell inner membrane. This is an uncharacterized protein from Escherichia coli (strain K12).